The chain runs to 102 residues: Small ribosomal subunit protein uS10 (102 aa).

It belongs to the universal ribosomal protein uS10 family. Part of the 30S ribosomal subunit.

In terms of biological role, involved in the binding of tRNA to the ribosomes. This is Small ribosomal subunit protein uS10 from Streptococcus suis (strain 98HAH33).